The following is a 93-amino-acid chain: MPRSLKKGPFVDQHLFVKVARENDKGTKNVIKTWSRRSMIIPDMLGHTIAVHDGRKHIPVFVTESMVGHKLGEFAPTRTFRGHVKDDRKGKRR.

The protein belongs to the universal ribosomal protein uS19 family.

Its function is as follows. Protein S19 forms a complex with S13 that binds strongly to the 16S ribosomal RNA. The protein is Small ribosomal subunit protein uS19 of Paenarthrobacter aurescens (strain TC1).